Here is a 38-residue protein sequence, read N- to C-terminus: Photosystem II reaction center protein L (38 aa).

Residues serine 17–phenylalanine 37 traverse the membrane as a helical segment.

The protein belongs to the PsbL family. PSII is composed of 1 copy each of membrane proteins PsbA, PsbB, PsbC, PsbD, PsbE, PsbF, PsbH, PsbI, PsbJ, PsbK, PsbL, PsbM, PsbT, PsbX, PsbY, PsbZ, Psb30/Ycf12, at least 3 peripheral proteins of the oxygen-evolving complex and a large number of cofactors. It forms dimeric complexes.

It is found in the plastid. It localises to the chloroplast thylakoid membrane. Functionally, one of the components of the core complex of photosystem II (PSII). PSII is a light-driven water:plastoquinone oxidoreductase that uses light energy to abstract electrons from H(2)O, generating O(2) and a proton gradient subsequently used for ATP formation. It consists of a core antenna complex that captures photons, and an electron transfer chain that converts photonic excitation into a charge separation. This subunit is found at the monomer-monomer interface and is required for correct PSII assembly and/or dimerization. This Chlamydomonas moewusii (Chlamydomonas eugametos) protein is Photosystem II reaction center protein L.